The chain runs to 229 residues: Ribonuclease 3 (229 aa).

Residues 8 to 130 enclose the RNase III domain; sequence LTELEKIVGY…IIGAIYLDSD (123 aa). Glu43 contacts Mg(2+). Asp47 is an active-site residue. The Mg(2+) site is built by Asp116 and Glu119. Residue Glu119 is part of the active site. Residues 157 to 227 form the DRBM domain; the sequence is DPKTRLQELL…ATAALEHLQE (71 aa). The segment at 201–229 is disordered; it reads SPFKGTGTSRRKAEQAAATAALEHLQESA.

This sequence belongs to the ribonuclease III family. As to quaternary structure, homodimer. The cofactor is Mg(2+).

Its subcellular location is the cytoplasm. It catalyses the reaction Endonucleolytic cleavage to 5'-phosphomonoester.. Digests double-stranded RNA. Involved in the processing of primary rRNA transcript to yield the immediate precursors to the large and small rRNAs (23S and 16S). Processes some mRNAs, and tRNAs when they are encoded in the rRNA operon. Processes pre-crRNA and tracrRNA of type II CRISPR loci if present in the organism. The protein is Ribonuclease 3 of Idiomarina loihiensis (strain ATCC BAA-735 / DSM 15497 / L2-TR).